A 374-amino-acid polypeptide reads, in one-letter code: Putative zinc finger MYND domain-containing protein R331 (374 aa).

Residues Cys-328, Cys-331, Cys-341, Cys-344, Cys-350, Cys-354, His-362, and Cys-366 each coordinate Zn(2+). The MYND-type zinc-finger motif lies at 328–366 (CFYCNKNIEKPVVCNKCFRIKYCSEKCQSEYNSYHSDDC).

This chain is Putative zinc finger MYND domain-containing protein R331, found in Acanthamoeba polyphaga (Amoeba).